A 548-amino-acid chain; its full sequence is Membrane protein insertase YidC (548 aa).

The chain crosses the membrane as a helical span at residues 6–26; it reads NLLIIALLFVSFMIWQAWEQD. The segment at 28-52 is disordered; the sequence is NPQPQQQTTQTTTTAAGSAADQGVP. Over residues 29–41 the composition is skewed to low complexity; the sequence is PQPQQQTTQTTTT. The next 4 helical transmembrane spans lie at 345–365, 420–440, 458–478, and 499–519; these read KFIH…TFIV, LGGC…YYML, LSAQ…MFFI, and PVIF…YYIV.

It belongs to the OXA1/ALB3/YidC family. Type 1 subfamily. As to quaternary structure, interacts with the Sec translocase complex via SecD. Specifically interacts with transmembrane segments of nascent integral membrane proteins during membrane integration.

Its subcellular location is the cell inner membrane. In terms of biological role, required for the insertion and/or proper folding and/or complex formation of integral membrane proteins into the membrane. Involved in integration of membrane proteins that insert both dependently and independently of the Sec translocase complex, as well as at least some lipoproteins. Aids folding of multispanning membrane proteins. The protein is Membrane protein insertase YidC of Klebsiella pneumoniae (strain 342).